We begin with the raw amino-acid sequence, 252 residues long: 3-dehydroquinate dehydratase (252 aa).

3-dehydroquinate is bound by residues Ser21, 46 to 48 (EWR), and Arg82. The active-site Proton donor/acceptor is the His143. Lys170 acts as the Schiff-base intermediate with substrate in catalysis. 3-dehydroquinate contacts are provided by Arg213, Ser232, and Gln236.

It belongs to the type-I 3-dehydroquinase family. Dimer of dimers.

The enzyme catalyses 3-dehydroquinate = 3-dehydroshikimate + H2O. The protein operates within metabolic intermediate biosynthesis; chorismate biosynthesis; chorismate from D-erythrose 4-phosphate and phosphoenolpyruvate: step 3/7. Inhibited by (2R)-2-methyl-3-dehydroquinic acid. In terms of biological role, involved in the third step of the chorismate pathway, which leads to the biosynthesis of aromatic amino acids. Catalyzes the cis-dehydration of 3-dehydroquinate (DHQ) and introduces the first double bond of the aromatic ring to yield 3-dehydroshikimate. The reaction involves the formation of an imine intermediate between the keto group of 3-dehydroquinate and the epsilon-amino group of Lys-170 at the active site. This is 3-dehydroquinate dehydratase from Salmonella typhi.